We begin with the raw amino-acid sequence, 200 residues long: Ribonuclease HII (200 aa).

The 200-residue stretch at M1–I200 folds into the RNase H type-2 domain. The a divalent metal cation site is built by D7, E8, and D99.

The protein belongs to the RNase HII family. Mn(2+) is required as a cofactor. Requires Mg(2+) as cofactor.

It is found in the cytoplasm. It catalyses the reaction Endonucleolytic cleavage to 5'-phosphomonoester.. Its function is as follows. Endonuclease that specifically degrades the RNA of RNA-DNA hybrids. This Nanoarchaeum equitans (strain Kin4-M) protein is Ribonuclease HII.